The chain runs to 353 residues: sn-glycerol-3-phosphate import ATP-binding protein UgpC 3 (353 aa).

The 232-residue stretch at 4-235 (IALKDVRKVY…PATTFVATFI (232 aa)) folds into the ABC transporter domain. 37–44 (GPSGCGKS) lines the ATP pocket.

This sequence belongs to the ABC transporter superfamily. sn-glycerol-3-phosphate importer (TC 3.A.1.1.3) family. The complex is composed of two ATP-binding proteins (UgpC), two transmembrane proteins (UgpA and UgpE) and a solute-binding protein (UgpB).

The protein resides in the cell inner membrane. The catalysed reaction is sn-glycerol 3-phosphate(out) + ATP + H2O = sn-glycerol 3-phosphate(in) + ADP + phosphate + H(+). Functionally, part of the ABC transporter complex UgpBAEC involved in sn-glycerol-3-phosphate (G3P) import. Responsible for energy coupling to the transport system. The polypeptide is sn-glycerol-3-phosphate import ATP-binding protein UgpC 3 (Agrobacterium fabrum (strain C58 / ATCC 33970) (Agrobacterium tumefaciens (strain C58))).